The primary structure comprises 259 residues: Hydroxyacylglutathione hydrolase (259 aa).

Zn(2+) is bound by residues His56, His58, Asp60, His61, His112, Asp133, and His171.

This sequence belongs to the metallo-beta-lactamase superfamily. Glyoxalase II family. In terms of assembly, monomer. Zn(2+) is required as a cofactor.

The enzyme catalyses an S-(2-hydroxyacyl)glutathione + H2O = a 2-hydroxy carboxylate + glutathione + H(+). Its pathway is secondary metabolite metabolism; methylglyoxal degradation; (R)-lactate from methylglyoxal: step 2/2. Thiolesterase that catalyzes the hydrolysis of S-D-lactoyl-glutathione to form glutathione and D-lactic acid. The chain is Hydroxyacylglutathione hydrolase from Pseudomonas putida (strain W619).